The sequence spans 908 residues: Collagen alpha-2(I) chain (908 aa).

Residues glycine 1–arginine 36 show a composition bias toward low complexity. 2 disordered regions span residues glycine 1–glycine 211 and isoleucine 227–serine 908. Residues alanine 45–glutamate 59 show a composition bias toward basic and acidic residues. Composition is skewed to low complexity over residues valine 129–proline 158, alanine 183–proline 197, proline 234–valine 249, serine 293–proline 309, alanine 403–glutamine 418, proline 465–proline 474, arginine 526–asparagine 542, and valine 569–alanine 589. The segment covering lysine 590–lysine 599 has biased composition (basic and acidic residues). The segment covering asparagine 602–alanine 617 has biased composition (low complexity). Positions glycine 627–glycine 636 are enriched in gly residues. 4 stretches are compositionally biased toward low complexity: residues alanine 637–threonine 647, alanine 701–serine 730, glutamate 745–glutamate 775, and proline 785–proline 805. A compositionally biased stretch (basic and acidic residues) spans arginine 809 to proline 820. The span at alanine 893 to serine 908 shows a compositional bias: pro residues.

It belongs to the fibrillar collagen family. In terms of assembly, trimers of one alpha 2(I) and two alpha 1(I) chains. Interacts (via C-terminus) with TMEM131 (via PapD-L domain); the interaction is direct and is involved in assembly and TRAPPIII ER-to-Golgi transport complex-dependent secretion of collagen. Prolines at the third position of the tripeptide repeating unit (G-X-Y) are hydroxylated in some or all of the chains. As to expression, forms the fibrils of tendon, ligaments and bones. In bones, the fibrils are mineralized with calcium hydroxyapatite.

The protein localises to the secreted. It is found in the extracellular space. It localises to the extracellular matrix. Its function is as follows. Type I collagen is a member of group I collagen (fibrillar forming collagen). This Toxodon sp protein is Collagen alpha-2(I) chain.